The sequence spans 202 residues: Matrix protein (202 aa).

Positions 1–33 are disordered; it reads MNILRKIVKNRKDEDTQKPSPASAPPDDDDLWL. The short motif at 35–38 is the PPXY motif element; sequence PPEY. Positions 115–151 are essential for glycoprotein binding; the sequence is KLRRTLIFQWADSRGPLEGEELEHSQEITWDDDTEFV.

This sequence belongs to the lyssavirus matrix protein family. Homomultimer. Interacts with nucleoprotein and with the cytoplasmic domain of glycoprotein. Interacts with host ATP6V1A; this interaction plays an important role in virion uncoating after viral entry.

It localises to the virion membrane. The protein resides in the host endomembrane system. The protein localises to the host cytoplasm. Plays a major role in assembly, budding and uncoating of virion after membrane fusion. Completely covers the ribonucleoprotein coil and keep it in condensed bullet-shaped form. Inhibits viral transcription and stimulates replication. Plays a major role in early induction of TRAIL-mediated apoptosis in infected neurons. Inhibits the integrated stress response (ISR) in the infected cell by blocking the formation of stress granules. The sequence is that of Matrix protein (M) from Homo sapiens (Human).